The chain runs to 392 residues: L-rhamnonate dehydratase (392 aa).

Residues H22 and R48 each contribute to the substrate site. D214, E240, and E268 together coordinate Mg(2+). H318 acts as the Proton acceptor in catalysis. E338 is a binding site for substrate.

The protein belongs to the mandelate racemase/muconate lactonizing enzyme family. RhamD subfamily. In terms of assembly, homooctamer; tetramer of dimers. Mg(2+) serves as cofactor.

The catalysed reaction is L-rhamnonate = 2-dehydro-3-deoxy-L-rhamnonate + H2O. In terms of biological role, catalyzes the dehydration of L-rhamnonate to 2-keto-3-deoxy-L-rhamnonate (KDR). This is L-rhamnonate dehydratase from Paraburkholderia phymatum (strain DSM 17167 / CIP 108236 / LMG 21445 / STM815) (Burkholderia phymatum).